A 37-amino-acid chain; its full sequence is U1-theraphotoxin-Hs1b (37 aa).

Disulfide bonds link cysteine 4–cysteine 18, cysteine 8–cysteine 29, and cysteine 23–cysteine 34.

Form 1 and form 2 may dimerize. Expressed by the venom gland.

The protein resides in the secreted. Lethal neurotoxin that blocks neuromuscular transmission. Acts cooperatively to potentiate the activity of huwentoxin-I. The protein is U1-theraphotoxin-Hs1b of Cyriopagopus schmidti (Chinese bird spider).